Reading from the N-terminus, the 219-residue chain is Small ribosomal subunit protein uS3c (219 aa).

The 73-residue stretch at 39 to 111 folds into the KH type-2 domain; sequence IRKFLMEKIK…NSFFNVKINF (73 aa).

This sequence belongs to the universal ribosomal protein uS3 family. In terms of assembly, part of the 30S ribosomal subunit.

The protein resides in the plastid. This chain is Small ribosomal subunit protein uS3c (rps3), found in Euglena longa (Euglenophycean alga).